Consider the following 273-residue polypeptide: Protein GMH1 (273 aa).

The disordered stretch occupies residues 1 to 33 (MSYLPTYSNDLPAGPQGQRRRNNGNENDARQGY). Ser2 bears the N-acetylserine mark. Topologically, residues 2–89 (SYLPTYSNDL…QTKNQWARDD (88 aa)) are cytoplasmic. The helical transmembrane segment at 90 to 110 (PSFFIFQIALISLSSIIWSIY) threads the bilayer. Over 111–134 (NSGFNNDSDMGALSIIGHFFKSLV) the chain is Lumenal. A helical membrane pass occupies residues 135 to 155 (MMVILDFFIFGFIMATIFYLL). Residues 156-175 (LNRSHFKFKSSQNSVVEWAY) are Cytoplasmic-facing. Residues 176-196 (CFDVHCNSFLIILLCLYFIQF) traverse the membrane as a helical segment. At 197–216 (LLLPIINLQNWISLLIGNSL) the chain is on the lumenal side. Residues 217 to 237 (YCFAIGHYFILTFYGYNQLPF) traverse the membrane as a helical segment. Residues 238 to 242 (LKNLN) lie on the Cytoplasmic side of the membrane. The chain crosses the membrane as a helical span at residues 243–263 (FILLPTLGLSIIYLISLFGID). Over 264 to 273 (LSKKLSFYNY) the chain is Lumenal.

The protein belongs to the unc-50 family. In terms of assembly, interacts with GEA1 and GEA2.

It localises to the golgi apparatus membrane. The protein localises to the endoplasmic reticulum membrane. The polypeptide is Protein GMH1 (GMH1) (Saccharomyces cerevisiae (strain ATCC 204508 / S288c) (Baker's yeast)).